Here is a 356-residue protein sequence, read N- to C-terminus: Histidinol-phosphate aminotransferase (356 aa).

K214 is modified (N6-(pyridoxal phosphate)lysine).

This sequence belongs to the class-II pyridoxal-phosphate-dependent aminotransferase family. Histidinol-phosphate aminotransferase subfamily. Homodimer. Requires pyridoxal 5'-phosphate as cofactor.

It catalyses the reaction L-histidinol phosphate + 2-oxoglutarate = 3-(imidazol-4-yl)-2-oxopropyl phosphate + L-glutamate. It participates in amino-acid biosynthesis; L-histidine biosynthesis; L-histidine from 5-phospho-alpha-D-ribose 1-diphosphate: step 7/9. This Shigella sonnei (strain Ss046) protein is Histidinol-phosphate aminotransferase.